A 182-amino-acid chain; its full sequence is Large ribosomal subunit protein uL16 (182 aa).

The protein belongs to the universal ribosomal protein uL16 family.

This chain is Large ribosomal subunit protein uL16, found in Pyrobaculum arsenaticum (strain DSM 13514 / JCM 11321 / PZ6).